Reading from the N-terminus, the 521-residue chain is MDEAVDVTTESNSLIKAVYQSRLRLTRLLLEGGAYINESNDRGETPLMIACKTKHVDHQSVSKVKMIKYLLENNADPNIQDKFGKTALMHACLENAGAEVVSLLLESGADPSLQDHTGFSALVYAVNSEDKETLRILLNACKAKGKEVIIITKDKSASGKQTTRQYLNVPPSPGIEGNNSPSPCTSPSDIELKTSPAPISNALETEKELFNFKEAASSCGFKGSSQPGSPTKKPHLSHVGGKLPLLQRLHSEPWLKIPPSLLHQHKVSSLQEELQDITPDEELSLQMNELMFSKRYFTRHQSIDVKDASHLLKTFDTAGARKLSYDEIHSHSIYPEANPNRPETLPVDQEPDLMHSISVSSLKSIVQRRNLGANHYSSDSQLTTRAGPAAAEDSKSLLEKKKMLCPQPLLTGSRESLESISVTALSRRNHAILERRGSGALLLDHIAHTRPGFLPPLNVNPHPPIPDISIHSKLISSGTKSLIPSAPHVPKEPKSKKMLLRRHSMHTEQIKQLMNLEEIFG.

ANK repeat units follow at residues 9–38 (TESN…YINE), 42–79 (RGET…DPNI), 83–113 (FGKT…DPSL), and 117–146 (TGFS…AKGK). The disordered stretch occupies residues 161-188 (QTTRQYLNVPPSPGIEGNNSPSPCTSPS). Residues 177-188 (GNNSPSPCTSPS) show a composition bias toward polar residues.

The protein belongs to the ANKRD34 family.

It localises to the cytoplasm. The protein resides in the nucleus. This Xenopus laevis (African clawed frog) protein is Ankyrin repeat domain-containing protein 34B (ankrd34b).